We begin with the raw amino-acid sequence, 263 residues long: 3-methyl-2-oxobutanoate hydroxymethyltransferase (263 aa).

The Mg(2+) site is built by Asp45 and Asp84. Residues 45 to 46, Asp84, and Lys112 each bind 3-methyl-2-oxobutanoate; that span reads DS. Position 114 (Glu114) interacts with Mg(2+). Residue Glu180 is the Proton acceptor of the active site.

This sequence belongs to the PanB family. Homodecamer; pentamer of dimers. The cofactor is Mg(2+).

Its subcellular location is the cytoplasm. It catalyses the reaction 3-methyl-2-oxobutanoate + (6R)-5,10-methylene-5,6,7,8-tetrahydrofolate + H2O = 2-dehydropantoate + (6S)-5,6,7,8-tetrahydrofolate. It participates in cofactor biosynthesis; (R)-pantothenate biosynthesis; (R)-pantoate from 3-methyl-2-oxobutanoate: step 1/2. Functionally, catalyzes the reversible reaction in which hydroxymethyl group from 5,10-methylenetetrahydrofolate is transferred onto alpha-ketoisovalerate to form ketopantoate. In Salmonella arizonae (strain ATCC BAA-731 / CDC346-86 / RSK2980), this protein is 3-methyl-2-oxobutanoate hydroxymethyltransferase.